The sequence spans 305 residues: Ribonuclease BN (305 aa).

Positions 64, 66, 68, 69, 141, 212, and 270 each coordinate Zn(2+). D68 functions as the Proton acceptor in the catalytic mechanism.

It belongs to the RNase Z family. RNase BN subfamily. Homodimer. Zn(2+) is required as a cofactor.

Functionally, zinc phosphodiesterase, which has both exoribonuclease and endoribonuclease activities. In Escherichia coli O157:H7, this protein is Ribonuclease BN.